A 666-amino-acid polypeptide reads, in one-letter code: MAAEALLSSLLGLLFLGLLLPAHLTGGVGSLNLEELSEMRYGIQILPLPVMGGQSQASDVVVVSSKYKQRYECRLPAGAIHFQREREEETPAYQGPGIPELLSPMRDAPCLLKTKDWWTYEFCYGRHIQQYHMEDSEIKGDVLYLGYYQSAFNWDDETAKASKQHRLKRYHSQTYGNGSKCDLNGKPREAEVRFLCDEGAGISGDYIDRVDEPFSCSYVLSIRTSRLCPHPLLRPPASAAPQAILCHPALQPDEYMAYLQRQAESKQHEEKVTEEVQDTDHQVWSGSKAAGAPPKKEDVSPTKEDKESEFWKMLQEPEEQATGTEEAQAGEQDLNHEAAADPAPAPPTDFQNNVQVKLIRSPADLIRLIEELKGAEKGKPSVRQEQPGDDTTEAPQREAEAKGKGGEPRGLVEEEDGDEEEEDEDEDEQQLLGEFEKELEGMLLPSDRERLRSEVKAGMERELENIIQETEKELDPEGLRKESEREQAILALTSTLDKLIKRLQESQSPELVQKYKKRRVVPQKPPPSPHPTEEEPEHRVRVRVTKLRHGGPNQDLTVLEMNRENPQLKQIEGLVTEVLEREGLTAEGKIEIKIVRPGAEGKEEDTRWLTDEDTRNLKEIFFNILVQGAEEANKERQRQSELESNYRRVWGSPGGEDTGDLDEFDF.

Positions 1 to 30 are cleaved as a signal peptide; it reads MAAEALLSSLLGLLFLGLLLPAHLTGGVGS. The region spanning 108 to 230 is the MRH domain; it reads APCLLKTKDW…SIRTSRLCPH (123 aa). A disulfide bond links C110 and C123. Positions 117, 118, and 130 each coordinate a mannooligosaccharide derivative. An N-linked (GlcNAc...) asparagine glycan is attached at N177. Intrachain disulfides connect C181–C216 and C196–C228. A mannooligosaccharide derivative-binding residues include D182, R188, E212, and Y218. Disordered stretches follow at residues 261-356, 370-449, 505-540, and 631-666; these read RQAE…NVQV, EELK…SDRE, ESQSPELVQKYKKRRVVPQKPPPSPHPTEEEPEHRV, and EANKERQRQSELESNYRRVWGSPGGEDTGDLDEFDF. Basic and acidic residues-rich tracts occupy residues 263-281 and 294-310; these read AESKQHEEKVTEEVQDTDH and PKKEDVSPTKEDKESEF. The segment covering 320 to 332 has biased composition (low complexity); it reads QATGTEEAQAGEQ. 2 stretches are compositionally biased toward basic and acidic residues: residues 370 to 379 and 395 to 412; these read EELKGAEKGK and PQREAEAKGKGGEPRGLV. Residues 413 to 429 show a composition bias toward acidic residues; the sequence is EEEDGDEEEEDEDEDEQ. Basic and acidic residues predominate over residues 434 to 449; sequence EFEKELEGMLLPSDRE. A compositionally biased stretch (basic and acidic residues) spans 631–646; the sequence is EANKERQRQSELESNY. Acidic residues predominate over residues 657 to 666; sequence DTGDLDEFDF.

Belongs to the OS-9 family. As to quaternary structure, component of the HRD1 complex, which comprises at least SYNV1/HRD1, DERL1/2, FAM8A1, HERPUD1/HERP, OS9, SEL1L and UBE2J1. FAM8A1 is stabilized by interaction with SYNV1, which prevents its proteasomal degradation. OS9 and UBE2J1 recruitment to the complex may be mediated by SEL1L. Through this complex, may interact with ERLEC1 and HSPA5. Interacts (via C-terminus) with CPNE6 (via second C2 domain); this interaction occurs in a calcium-dependent manner in vitro. Interacts with CREB3. Post-translationally, intramolecular disulfide bonds.

It is found in the endoplasmic reticulum lumen. Functionally, lectin component of the HRD1 complex, which functions in endoplasmic reticulum (ER) quality control and ER-associated degradation (ERAD). Specifically recognizes and binds improperly folded glycoproteins as well as hyperglycosylated proteins, retain them in the ER, and transfers them to the ubiquitination machinery and promote their degradation. Possible targets include TRPV4 as well as hyperglycosylated HSP90B1. This chain is Protein OS-9 (Os9), found in Rattus norvegicus (Rat).